The following is a 261-amino-acid chain: 5'-nucleotidase SurE (261 aa).

Positions 8, 9, 39, and 94 each coordinate a divalent metal cation.

It belongs to the SurE nucleotidase family. It depends on a divalent metal cation as a cofactor.

It localises to the cytoplasm. It catalyses the reaction a ribonucleoside 5'-phosphate + H2O = a ribonucleoside + phosphate. Its function is as follows. Nucleotidase that shows phosphatase activity on nucleoside 5'-monophosphates. This is 5'-nucleotidase SurE from Archaeoglobus fulgidus (strain ATCC 49558 / DSM 4304 / JCM 9628 / NBRC 100126 / VC-16).